A 109-amino-acid polypeptide reads, in one-letter code: Meiotically up-regulated gene 153 protein (109 aa).

The protein resides in the mitochondrion. In terms of biological role, has a role in meiosis. This Schizosaccharomyces pombe (strain 972 / ATCC 24843) (Fission yeast) protein is Meiotically up-regulated gene 153 protein (mug153).